Here is a 747-residue protein sequence, read N- to C-terminus: Transcription factor phm2 (747 aa).

A DNA-binding region (zn(2)-C6 fungal-type) is located at residues Cys-21–Cys-50. 2 disordered regions span residues Gly-112–Ser-150 and Thr-414–Arg-436.

Its subcellular location is the nucleus. Functionally, transcription factor that regulates the expression of the gene cluster that mediates the biosynthesis of the trans-fused decalin-containing tetramic acid phomasetin. This is Transcription factor phm2 from Pyrenochaetopsis sp.